The primary structure comprises 177 residues: Peptide methionine sulfoxide reductase MsrA (177 aa).

Cysteine 15 is an active-site residue.

It belongs to the MsrA Met sulfoxide reductase family.

It catalyses the reaction L-methionyl-[protein] + [thioredoxin]-disulfide + H2O = L-methionyl-(S)-S-oxide-[protein] + [thioredoxin]-dithiol. The enzyme catalyses [thioredoxin]-disulfide + L-methionine + H2O = L-methionine (S)-S-oxide + [thioredoxin]-dithiol. Functionally, has an important function as a repair enzyme for proteins that have been inactivated by oxidation. Catalyzes the reversible oxidation-reduction of methionine sulfoxide in proteins to methionine. The chain is Peptide methionine sulfoxide reductase MsrA from Listeria innocua serovar 6a (strain ATCC BAA-680 / CLIP 11262).